Here is a 321-residue protein sequence, read N- to C-terminus: F420-non-reducing hydrogenase iron-sulfur subunit G (321 aa).

This sequence belongs to the [NiFe]/[NiFeSe] hydrogenase small subunit family. As to quaternary structure, the F420-non-reducing hydrogenase is composed of three subunits; MvhA, MvhD and MvhG. It forms a complex with the heterodisulfide reductase (Hdr).

It is found in the cytoplasm. Part of a complex that provides reducing equivalents for heterodisulfide reductase. The protein is F420-non-reducing hydrogenase iron-sulfur subunit G (mvhG) of Archaeoglobus profundus (strain DSM 5631 / JCM 9629 / NBRC 100127 / Av18).